Consider the following 307-residue polypeptide: Glycerol-3-phosphate dehydrogenase [NAD(P)+] (307 aa).

Residues tryptophan 14, arginine 34, arginine 35, and lysine 82 each contribute to the NADPH site. Lysine 82 and glycine 110 together coordinate sn-glycerol 3-phosphate. An NADPH-binding site is contributed by serine 114. Residues lysine 165, aspartate 218, serine 228, arginine 229, and asparagine 230 each coordinate sn-glycerol 3-phosphate. Lysine 165 serves as the catalytic Proton acceptor. Arginine 229 contacts NADPH. Glutamate 255 serves as a coordination point for NADPH.

The protein belongs to the NAD-dependent glycerol-3-phosphate dehydrogenase family.

Its subcellular location is the cytoplasm. The enzyme catalyses sn-glycerol 3-phosphate + NAD(+) = dihydroxyacetone phosphate + NADH + H(+). It carries out the reaction sn-glycerol 3-phosphate + NADP(+) = dihydroxyacetone phosphate + NADPH + H(+). The protein operates within membrane lipid metabolism; glycerophospholipid metabolism. In terms of biological role, catalyzes the reduction of the glycolytic intermediate dihydroxyacetone phosphate (DHAP) to sn-glycerol 3-phosphate (G3P), the key precursor for phospholipid synthesis. In Trichormus variabilis (strain ATCC 29413 / PCC 7937) (Anabaena variabilis), this protein is Glycerol-3-phosphate dehydrogenase [NAD(P)+].